A 121-amino-acid chain; its full sequence is Large ribosomal subunit protein bL12 (121 aa).

It belongs to the bacterial ribosomal protein bL12 family. In terms of assembly, homodimer. Part of the ribosomal stalk of the 50S ribosomal subunit. Forms a multimeric L10(L12)X complex, where L10 forms an elongated spine to which 2 to 4 L12 dimers bind in a sequential fashion. Binds GTP-bound translation factors.

Functionally, forms part of the ribosomal stalk which helps the ribosome interact with GTP-bound translation factors. Is thus essential for accurate translation. This Acinetobacter baylyi (strain ATCC 33305 / BD413 / ADP1) protein is Large ribosomal subunit protein bL12.